We begin with the raw amino-acid sequence, 212 residues long: MSVLTPYAGRLADGIAALGLDIPTATQARLIAFGELLLKWNKVYNLTAIRAPQEVITHHLLDSLAVLPYLSAVTRLADIGSGGGLPGIPLAIVRPELSVISVETVNKKASFQQQAKIELGLGNFQPLNARVENLKPEQPCDGVISRAFSSLKDFVELSGHLVGDGGALYAMKGVRPDDEVAALPAGWTVRATHPLAVPGLDAERHLLVIARG.

S-adenosyl-L-methionine-binding positions include Gly80, Leu85, 131–132, and Arg146; that span reads VE.

This sequence belongs to the methyltransferase superfamily. RNA methyltransferase RsmG family.

Its subcellular location is the cytoplasm. The enzyme catalyses guanosine(527) in 16S rRNA + S-adenosyl-L-methionine = N(7)-methylguanosine(527) in 16S rRNA + S-adenosyl-L-homocysteine. In terms of biological role, specifically methylates the N7 position of guanine in position 527 of 16S rRNA. This Azoarcus sp. (strain BH72) protein is Ribosomal RNA small subunit methyltransferase G.